We begin with the raw amino-acid sequence, 490 residues long: Histone-lysine N-methyltransferase SMYD1 (490 aa).

Residues 7–253 enclose the SET domain; the sequence is ENVEVFTAEG…EGEELTVSYI (247 aa). 17-19 provides a ligand contact to S-adenosyl-L-methionine; the sequence is KGR. Residues Cys52, Cys55, Cys65, Cys68, Cys74, Cys78, His86, and Cys90 each coordinate Zn(2+). The MYND-type zinc-finger motif lies at 52–90; sequence CHTCFKRQEKLHRCGQCKFAHYCDRTCQKDAWLNHKNEC. S-adenosyl-L-methionine contacts are provided by residues His135 and 205–206; that span reads NH. A Zn(2+)-binding site is contributed by Cys208. 270–272 contributes to the S-adenosyl-L-methionine binding site; that stretch reads YYF. Zn(2+)-binding residues include Cys274, Cys276, and Cys279.

It belongs to the class V-like SAM-binding methyltransferase superfamily. In terms of assembly, interacts with HDAC1, HDAC2 and HDAC3. Interacts (via MYND-type zinc finger) with NACA isoform skNAC. Expression seems mostly restricted to heart and skeletal muscle.

The protein localises to the cytoplasm. It is found in the nucleus. The catalysed reaction is L-lysyl(4)-[histone H3] + 3 S-adenosyl-L-methionine = N(6),N(6),N(6)-trimethyl-L-lysyl(4)-[histone H3] + 3 S-adenosyl-L-homocysteine + 3 H(+). Methylates histone H3 at 'Lys-4' (H3K4me), seems able to perform both mono-, di-, and trimethylation. Acts as a transcriptional repressor. Essential for cardiomyocyte differentiation and cardiac morphogenesis. This chain is Histone-lysine N-methyltransferase SMYD1 (SMYD1), found in Homo sapiens (Human).